Consider the following 360-residue polypeptide: Cannabinoid receptor 2 (360 aa).

Residues 1-33 (MEECWVTEIANGSKDGLDSNPMKDYMILSGPQK) lie on the Extracellular side of the membrane. An N-linked (GlcNAc...) asparagine glycan is attached at asparagine 11. Residues 34-59 (TAVAVLCTLLGLLSALENVAVLYLIL) traverse the membrane as a helical segment. Topologically, residues 60–71 (SSHQLRRKPSYL) are cytoplasmic. A helical transmembrane segment spans residues 72-92 (FIGSLAGADFLASVVFACSFV). The Extracellular segment spans residues 93-104 (NFHVFHGVDSKA). Residues 105–129 (VFLLKIGSVTMTFTASVGSLLLTAI) form a helical membrane-spanning segment. Topologically, residues 130–149 (DRYLCLRYPPSYKALLTRGR) are cytoplasmic. The helical transmembrane segment at 150–172 (ALVTLGIMWVLSALVSYLPLMGW) threads the bilayer. At 173 to 188 (TCCPRPCSELFPLIPN) the chain is on the extracellular side. The chain crosses the membrane as a helical span at residues 189-214 (DYLLSWLLFIAFLFSGIIYTYGHVLW). Topologically, residues 215-246 (KAHQHVASLSGHQDRQVPGMARMRLDVRLAKT) are cytoplasmic. A helical transmembrane segment spans residues 247-267 (LGLVLAVLLICWFPVLALMAH). Topologically, residues 268–279 (SLATTLSDQVKK) are extracellular. Residues 280 to 301 (AFAFCSMLCLINSMVNPVIYAL) traverse the membrane as a helical segment. The Cytoplasmic segment spans residues 302–360 (RSGEIRSSAHHCLAHWKKCVRGLGSEAKEEAPRSSVTETEADGKITPWPDSRDLDLSDC). Positions 327 to 360 (EAKEEAPRSSVTETEADGKITPWPDSRDLDLSDC) are disordered. Phosphoserine is present on residues serine 335 and serine 336. Threonine 338 is modified (phosphothreonine). The span at 351–360 (DSRDLDLSDC) shows a compositional bias: basic and acidic residues. Serine 352 bears the Phosphoserine mark.

This sequence belongs to the G-protein coupled receptor 1 family. Post-translationally, constitutively phosphorylated on Ser-352; phosphorylation increases cell internalization and desensitizes the receptor. In terms of tissue distribution, preferentially expressed in cells of the immune system with higher expression in B-cells and NK cells (at protein level). Expressed in skin in suprabasal layers and hair follicles (at protein level). Highly expressed in tonsil and to a lower extent in spleen, peripheral blood mononuclear cells, and thymus. PubMed:14657172 could not detect expression in normal brain. Expressed in brain by perivascular microglial cells and dorsal root ganglion sensory neurons (at protein level). Two isoforms are produced by alternative promoter usage and differ only in the 5' UTR: isoform CB2A is observed predominantly in testis with some expression in brain, while isoform CB2B is predominant in spleen and leukocytes.

The protein localises to the cell membrane. The protein resides in the cell projection. Its subcellular location is the dendrite. It localises to the perikaryon. Functionally, heterotrimeric G protein-coupled receptor for endocannabinoid 2-arachidonoylglycerol mediating inhibition of adenylate cyclase. May function in inflammatory response, nociceptive transmission and bone homeostasis. The polypeptide is Cannabinoid receptor 2 (CNR2) (Homo sapiens (Human)).